The following is a 294-amino-acid chain: tRNA dimethylallyltransferase (294 aa).

11–18 (GPTAVGKT) provides a ligand contact to ATP. 13–18 (TAVGKT) is a binding site for substrate. An interaction with substrate tRNA region spans residues 36-39 (DSQQ).

The protein belongs to the IPP transferase family. Monomer. Mg(2+) is required as a cofactor.

It carries out the reaction adenosine(37) in tRNA + dimethylallyl diphosphate = N(6)-dimethylallyladenosine(37) in tRNA + diphosphate. Functionally, catalyzes the transfer of a dimethylallyl group onto the adenine at position 37 in tRNAs that read codons beginning with uridine, leading to the formation of N6-(dimethylallyl)adenosine (i(6)A). This chain is tRNA dimethylallyltransferase, found in Lactococcus lactis subsp. cremoris (strain MG1363).